Consider the following 91-residue polypeptide: Small ribosomal subunit protein uS19 (91 aa).

Belongs to the universal ribosomal protein uS19 family.

In terms of biological role, protein S19 forms a complex with S13 that binds strongly to the 16S ribosomal RNA. The chain is Small ribosomal subunit protein uS19 from Psychrobacter arcticus (strain DSM 17307 / VKM B-2377 / 273-4).